Here is a 153-residue protein sequence, read N- to C-terminus: Bursicon (153 aa).

The first 22 residues, 1-22, serve as a signal peptide directing secretion; sequence MLLYHIVGASVLICLLNETAKA. Cystine bridges form between Cys29-Cys78, Cys43-Cys92, Cys53-Cys113, Cys57-Cys115, and Cys75-Cys118. Residues 29-119 enclose the CTCK domain; sequence CQATPVIHFL…PLECMCRPCT (91 aa).

In terms of assembly, heterodimer of burs and pburs.

The protein localises to the secreted. In terms of biological role, final heterodimeric neurohormone released at the end of the molting cycle, involved in the sclerotization (tanning) of the insect cuticle, melanization and wing spreading. This chain is Bursicon, found in Apis mellifera (Honeybee).